The following is a 398-amino-acid chain: MENETVSELNQTQLQPRAVVALEYQVVTILLVLIICGLGIVGNIMVVLVVMRTKHMRTPTNCYLVSLAVADLMVLVAAGLPNITDSIYGSWVYGYVGCLCITYLQYLGINASSCSITAFTIERYIAICHPIKAQFLCTFSRAKKIIIFVWAFTSLYCMLWFFLLDLNISTYKDAIVISCGYKISRNYYSPIYLMDFGVFYVVPMILATVLYGFIARILFLNPIPSDPKENSKTWKNDSTHQNTNLNVNTSNRCFNSTVSSRKQVTKMLAVVVILFALLWMPYRTLVVVNSFLSSPFQENWFLLFCRICIYLNSAINPVIYNLMSQKFRAAFRKLCNCKQKPTEKPANYSVALNYSVIKESDHFSTELDDITVTDTYLSATKVSFDDTCLASEVSFSQS.

Residues 1 to 28 (MENETVSELNQTQLQPRAVVALEYQVVT) lie on the Extracellular side of the membrane. N3 and N10 each carry an N-linked (GlcNAc...) asparagine glycan. The chain crosses the membrane as a helical span at residues 29-51 (ILLVLIICGLGIVGNIMVVLVVM). The Cytoplasmic portion of the chain corresponds to 52–61 (RTKHMRTPTN). Residues 62 to 83 (CYLVSLAVADLMVLVAAGLPNI) traverse the membrane as a helical segment. The Extracellular portion of the chain corresponds to 84–99 (TDSIYGSWVYGYVGCL). C98 and C179 are disulfide-bonded. The chain crosses the membrane as a helical span at residues 100–121 (CITYLQYLGINASSCSITAFTI). Topologically, residues 122-144 (ERYIAICHPIKAQFLCTFSRAKK) are cytoplasmic. The chain crosses the membrane as a helical span at residues 145-168 (IIIFVWAFTSLYCMLWFFLLDLNI). The Extracellular segment spans residues 169 to 193 (STYKDAIVISCGYKISRNYYSPIYL). A helical membrane pass occupies residues 194-215 (MDFGVFYVVPMILATVLYGFIA). At 216-266 (RILFLNPIPSDPKENSKTWKNDSTHQNTNLNVNTSNRCFNSTVSSRKQVTK) the chain is on the cytoplasmic side. Residues 267-288 (MLAVVVILFALLWMPYRTLVVV) traverse the membrane as a helical segment. The Extracellular portion of the chain corresponds to 289–296 (NSFLSSPF). The helical transmembrane segment at 297-319 (QENWFLLFCRICIYLNSAINPVI) threads the bilayer. At 320 to 398 (YNLMSQKFRA…LASEVSFSQS (79 aa)) the chain is on the cytoplasmic side.

This sequence belongs to the G-protein coupled receptor 1 family.

It localises to the cell membrane. Its function is as follows. Receptor for thyrotropin-releasing hormone (TRH). Upon ligand binding, this G-protein-coupled receptor triggers activation of the phosphatidylinositol (IP3)-calcium-protein kinase C (PKC) pathway. This is Thyrotropin-releasing hormone receptor (TRHR) from Homo sapiens (Human).